The primary structure comprises 648 residues: Golgin subfamily A member 8G (648 aa).

The span at 1–11 (MWPQARLPPHP) shows a compositional bias: pro residues. 2 disordered regions span residues 1–84 (MWPQ…SATL) and 119–139 (NKQV…KQKA). Residues 50–62 (TNGSIHETATSGG) are compositionally biased toward polar residues. Coiled-coil stretches lie at residues 105-160 (VSQL…LNTD), 223-275 (LEQS…MSQE), and 318-424 (EVEL…QQKQ). The segment covering 121–139 (QVEHQLEEEKKANNEKQKA) has biased composition (basic and acidic residues). 4 disordered regions span residues 356 to 376 (LREQ…QEER), 434 to 461 (ALPG…SIPQ), 508 to 549 (PITK…GVAA), and 600 to 624 (PVQG…QDHQ). Over residues 441 to 453 (GGGHLDSEGEEAP) the composition is skewed to basic and acidic residues. Gly residues predominate over residues 521–534 (PGGGHHQAGPGQGG).

This sequence belongs to the GOLGA8 family.

The sequence is that of Golgin subfamily A member 8G from Homo sapiens (Human).